The chain runs to 1007 residues: Probable beta-galactosidase A (1007 aa).

An N-terminal signal peptide occupies residues 1–18; the sequence is MRLLPVWTAALLAAQAAG. Residues Tyr96, Asn140, Ala141, and Glu142 each coordinate substrate. Residue Asn156 is glycosylated (N-linked (GlcNAc...) asparagine). A substrate-binding site is contributed by Asn199. Glu200 acts as the Proton donor in catalysis. Cys205 and Cys206 form a disulfide bridge. Tyr260 serves as a coordination point for substrate. Cysteines 266 and 315 form a disulfide. Glu298 functions as the Nucleophile in the catalytic mechanism. Residue Tyr364 participates in substrate binding. Asn405, Asn422, Asn621, Asn740, Asn775, and Asn914 each carry an N-linked (GlcNAc...) asparagine glycan.

Belongs to the glycosyl hydrolase 35 family.

The protein localises to the secreted. It carries out the reaction Hydrolysis of terminal non-reducing beta-D-galactose residues in beta-D-galactosides.. Functionally, cleaves beta-linked terminal galactosyl residues from gangliosides, glycoproteins, and glycosaminoglycans. The polypeptide is Probable beta-galactosidase A (lacA) (Emericella nidulans (strain FGSC A4 / ATCC 38163 / CBS 112.46 / NRRL 194 / M139) (Aspergillus nidulans)).